We begin with the raw amino-acid sequence, 721 residues long: 1,4-alpha-glucan branching enzyme GlgB (721 aa).

Catalysis depends on aspartate 400, which acts as the Nucleophile. The active-site Proton donor is the glutamate 453.

Belongs to the glycosyl hydrolase 13 family. GlgB subfamily. Monomer.

The catalysed reaction is Transfers a segment of a (1-&gt;4)-alpha-D-glucan chain to a primary hydroxy group in a similar glucan chain.. It functions in the pathway glycan biosynthesis; glycogen biosynthesis. Functionally, catalyzes the formation of the alpha-1,6-glucosidic linkages in glycogen by scission of a 1,4-alpha-linked oligosaccharide from growing alpha-1,4-glucan chains and the subsequent attachment of the oligosaccharide to the alpha-1,6 position. The sequence is that of 1,4-alpha-glucan branching enzyme GlgB from Chlamydia abortus (strain DSM 27085 / S26/3) (Chlamydophila abortus).